A 338-amino-acid chain; its full sequence is 1-aminocyclopropane-1-carboxylate deaminase (338 aa).

K51 carries the post-translational modification N6-(pyridoxal phosphate)lysine. The active-site Nucleophile is the S78.

This sequence belongs to the ACC deaminase/D-cysteine desulfhydrase family. As to quaternary structure, homotrimer. Requires pyridoxal 5'-phosphate as cofactor.

It catalyses the reaction 1-aminocyclopropane-1-carboxylate + H2O = 2-oxobutanoate + NH4(+). In terms of biological role, catalyzes a cyclopropane ring-opening reaction, the irreversible conversion of 1-aminocyclopropane-1-carboxylate (ACC) to ammonia and alpha-ketobutyrate. Allows growth on ACC as a nitrogen source. This chain is 1-aminocyclopropane-1-carboxylate deaminase, found in Ralstonia pickettii (strain 12J).